A 29-amino-acid polypeptide reads, in one-letter code: GILDSLKNLAKNAAQILLNKASCKLSGQC.

Cysteines 23 and 29 form a disulfide.

Expressed by the skin glands.

The protein resides in the secreted. In terms of biological role, antimicrobial peptide. This is Brevinin-2Rd from Pelophylax ridibundus (Marsh frog).